Consider the following 256-residue polypeptide: Thiazole synthase (256 aa).

Catalysis depends on lysine 99, which acts as the Schiff-base intermediate with DXP. Residues glycine 160, 186–187 (AG), and 208–209 (NT) contribute to the 1-deoxy-D-xylulose 5-phosphate site.

It belongs to the ThiG family. In terms of assembly, homotetramer. Forms heterodimers with either ThiH or ThiS.

The protein localises to the cytoplasm. The catalysed reaction is [ThiS sulfur-carrier protein]-C-terminal-Gly-aminoethanethioate + 2-iminoacetate + 1-deoxy-D-xylulose 5-phosphate = [ThiS sulfur-carrier protein]-C-terminal Gly-Gly + 2-[(2R,5Z)-2-carboxy-4-methylthiazol-5(2H)-ylidene]ethyl phosphate + 2 H2O + H(+). It participates in cofactor biosynthesis; thiamine diphosphate biosynthesis. In terms of biological role, catalyzes the rearrangement of 1-deoxy-D-xylulose 5-phosphate (DXP) to produce the thiazole phosphate moiety of thiamine. Sulfur is provided by the thiocarboxylate moiety of the carrier protein ThiS. In vitro, sulfur can be provided by H(2)S. This chain is Thiazole synthase, found in Neorickettsia sennetsu (strain ATCC VR-367 / Miyayama) (Ehrlichia sennetsu).